Here is a 210-residue protein sequence, read N- to C-terminus: Small ribosomal subunit protein uS3 (210 aa).

Residues 39–107 enclose the KH type-2 domain; that stretch reads IREKLMEKLK…EILLDIQEVK (69 aa).

It belongs to the universal ribosomal protein uS3 family. In terms of assembly, part of the 30S ribosomal subunit. Forms a tight complex with proteins S10 and S14.

Its function is as follows. Binds the lower part of the 30S subunit head. Binds mRNA in the 70S ribosome, positioning it for translation. The protein is Small ribosomal subunit protein uS3 of Opitutus terrae (strain DSM 11246 / JCM 15787 / PB90-1).